Reading from the N-terminus, the 343-residue chain is Tetraacyldisaccharide 4'-kinase (343 aa).

An ATP-binding site is contributed by 55 to 62 (TVGGEGKT).

It belongs to the LpxK family.

It carries out the reaction a lipid A disaccharide + ATP = a lipid IVA + ADP + H(+). It functions in the pathway glycolipid biosynthesis; lipid IV(A) biosynthesis; lipid IV(A) from (3R)-3-hydroxytetradecanoyl-[acyl-carrier-protein] and UDP-N-acetyl-alpha-D-glucosamine: step 6/6. Functionally, transfers the gamma-phosphate of ATP to the 4'-position of a tetraacyldisaccharide 1-phosphate intermediate (termed DS-1-P) to form tetraacyldisaccharide 1,4'-bis-phosphate (lipid IVA). This chain is Tetraacyldisaccharide 4'-kinase, found in Chelativorans sp. (strain BNC1).